The primary structure comprises 489 residues: MPTLMVQGTTSDAGKTTVVAALCRWLARQGVSVAPFKPQNMALNSAVTVDGGEIGRSTALQALACGLEPHSDMNPVLLKPQSDCGAQVILRGKVHGNMDALDYHAYKAEAMNSVMASWRDLSARYDVVIAEGAGSPAEINLRANDIANMGFAEAADCPVLLVGDIDKGGVFAQLVGTLALISDSERGRTAGFVINRFRGDIALLEPGLDWLTEHTGKPVFGVLPYLHGLVIDSEDSVSAAGTSEAGALKVVVPVLPRISNHNDFDPLRLHPGVDLVFVGTDEPIPPADLIILPGSKSTRHDLQWLKQQGWPEAIQKHLRYGGKLLGICGGFQMLGLKVEDPEGLEGEVGTTKGLALFEMVTRMVPGKQLRMVNGGLTSHVASTAVTGALKGYEMHNGVTEGAALVRPFAELEGRPDGAVSADGQVAGTYIHGVFDEPAACKAILAWAGLKTQGEQSVDYQRHRLQQLDRLADQVDQCLDTDRLRSLLQL.

Residues 247–439 form the GATase cobBQ-type domain; sequence ALKVVVPVLP…IHGVFDEPAA (193 aa). The active-site Nucleophile is cysteine 328. Residue histidine 431 is part of the active site.

The protein belongs to the CobB/CobQ family. CobQ subfamily.

It participates in cofactor biosynthesis; adenosylcobalamin biosynthesis. Functionally, catalyzes amidations at positions B, D, E, and G on adenosylcobyrinic A,C-diamide. NH(2) groups are provided by glutamine, and one molecule of ATP is hydrogenolyzed for each amidation. The chain is Cobyric acid synthase from Marinobacter nauticus (strain ATCC 700491 / DSM 11845 / VT8) (Marinobacter aquaeolei).